The following is a 160-amino-acid chain: 3-hydroxyacyl-[acyl-carrier-protein] dehydratase FabZ (160 aa).

Residue His63 is part of the active site.

The protein belongs to the thioester dehydratase family. FabZ subfamily.

It localises to the cytoplasm. The enzyme catalyses a (3R)-hydroxyacyl-[ACP] = a (2E)-enoyl-[ACP] + H2O. Involved in unsaturated fatty acids biosynthesis. Catalyzes the dehydration of short chain beta-hydroxyacyl-ACPs and long chain saturated and unsaturated beta-hydroxyacyl-ACPs. This chain is 3-hydroxyacyl-[acyl-carrier-protein] dehydratase FabZ, found in Xylella fastidiosa (strain M23).